A 131-amino-acid polypeptide reads, in one-letter code: Small ribosomal subunit protein uS8 (131 aa).

It belongs to the universal ribosomal protein uS8 family. As to quaternary structure, part of the 30S ribosomal subunit. Contacts proteins S5 and S12.

Its function is as follows. One of the primary rRNA binding proteins, it binds directly to 16S rRNA central domain where it helps coordinate assembly of the platform of the 30S subunit. In Bordetella petrii (strain ATCC BAA-461 / DSM 12804 / CCUG 43448), this protein is Small ribosomal subunit protein uS8.